The following is a 452-amino-acid chain: tRNA modification GTPase MnmE (452 aa).

Arg-21, Glu-78, and Lys-118 together coordinate (6S)-5-formyl-5,6,7,8-tetrahydrofolate. Positions 214-375 (GMKVVIAGRP…LREHLKQAMG (162 aa)) constitute a TrmE-type G domain. Asn-224 contacts K(+). GTP contacts are provided by residues 224-229 (NAGKSS), 243-249 (TDIAGTT), and 268-271 (DTAG). Ser-228 contacts Mg(2+). The K(+) site is built by Thr-243, Ile-245, and Thr-248. Thr-249 contacts Mg(2+). Residue Lys-452 coordinates (6S)-5-formyl-5,6,7,8-tetrahydrofolate.

It belongs to the TRAFAC class TrmE-Era-EngA-EngB-Septin-like GTPase superfamily. TrmE GTPase family. As to quaternary structure, homodimer. Heterotetramer of two MnmE and two MnmG subunits. The cofactor is K(+).

The protein localises to the cytoplasm. Exhibits a very high intrinsic GTPase hydrolysis rate. Involved in the addition of a carboxymethylaminomethyl (cmnm) group at the wobble position (U34) of certain tRNAs, forming tRNA-cmnm(5)s(2)U34. The protein is tRNA modification GTPase MnmE of Haemophilus influenzae (strain PittGG).